Consider the following 284-residue polypeptide: Pseudopaline exporter CntI (284 aa).

The next 10 helical transmembrane spans lie at 2–22 (VLDLLKSGVLLAVLASFTFSV), 34–54 (LPAAEIVFFRSAIGTLLIYLL), 74–94 (GVMGALYLVCYFYAIAHIPLA), 96–116 (ASILAHMSPFFVILFSALFLG), 122–142 (AVYWLLLVVVLGALMIVKPFS), 147–167 (SVYAVVGLLSAVFAAGASVAI), 179–199 (IVFYFLAVATLVAIPLMWSDF), 209–229 (GLLLAIGVVSLLGQVFLTRAF), 236–256 (IVAVTRYIGIVFNAGWGWLFW), and 259–279 (VPDALTIAGGVLIVVACIALS). 2 consecutive EamA domains span residues 8–138 (SGVL…LMIV) and 151–279 (VVGL…IALS).

This sequence belongs to the EamA transporter family.

Its subcellular location is the cell inner membrane. Its function is as follows. Transports the metallophore pseudopaline, which is involved in the acquisition of nickel and zinc, and thus enables bacterial growth inside the host, where metal access is limited. Is probably involved in the export of pseudopaline. The polypeptide is Pseudopaline exporter CntI (Pseudomonas aeruginosa (strain UCBPP-PA14)).